Reading from the N-terminus, the 278-residue chain is Trehalose/maltose transport system permease protein MalG (278 aa).

A run of 6 helical transmembrane segments spans residues 12–32 (IIGA…MIVV), 74–94 (IIIA…AAYA), 106–126 (IPIF…GYLF), 141–161 (LYFP…LSYF), 186–206 (IILP…FIAA), and 242–262 (GSVM…ALLF). An ABC transmembrane type-1 domain is found at 70 to 262 (LKNSIIIASL…IPLVIMALLF (193 aa)).

It belongs to the binding-protein-dependent transport system permease family. In terms of assembly, the complex is composed of two ATP-binding proteins (MalK), two transmembrane proteins (MalG and MalF) and a solute-binding protein (MalE).

Its subcellular location is the cell membrane. In terms of biological role, part of the ABC transporter complex MalEFGK involved in trehalose/maltose import. Responsible for the translocation of the substrate across the membrane. The protein is Trehalose/maltose transport system permease protein MalG (malG) of Thermococcus litoralis (strain ATCC 51850 / DSM 5473 / JCM 8560 / NS-C).